The primary structure comprises 303 residues: RELT-like protein 2 (303 aa).

The helical transmembrane segment at leucine 15 to isoleucine 35 threads the bilayer. Disordered stretches follow at residues cysteine 46–methionine 67 and cysteine 132–methionine 303. The residue at position 52 (serine 52) is a Phosphoserine. Composition is skewed to basic and acidic residues over residues arginine 148–threonine 158 and threonine 172–proline 188. Over residues glycine 194–proline 212 the composition is skewed to gly residues. Positions glutamine 278–leucine 296 are enriched in polar residues.

It belongs to the RELT family. Interacts with RELT, RELL1 and OXSR1. Interacts with PLSCR1. Interacts with TRAF2. In terms of processing, phosphorylated in vitro by OXSR1. As to expression, primarily expressed in spleen, thymus, testis, peripheral blood leukocytes, brain and placenta. Not detected in prostate, ovary, small intestine, colon, heart, lung, liver, skeletal muscle, kidney and pancreas.

It localises to the cell membrane. Its function is as follows. Induces activation of MAPK14/p38 cascade, when overexpressed. Induces apoptosis, when overexpressed. The chain is RELT-like protein 2 (RELL2) from Homo sapiens (Human).